Consider the following 1066-residue polypeptide: FHIP family protein GH13096 (1066 aa).

The span at 1-15 (MSWLRTSPLRQSLTR) shows a compositional bias: polar residues. The tract at residues 1 to 33 (MSWLRTSPLRQSLTRNSGGNGSGGSGNSGNASA) is disordered. The segment covering 18–27 (GGNGSGGSGN) has biased composition (gly residues). Ser512 is subject to Phosphoserine. Disordered stretches follow at residues 647 to 688 (SFKW…NSSG), 827 to 885 (DNSP…RSDN), and 942 to 1010 (SRGV…FNSE). Residues 658 to 687 (NDATTTTATSDPDVEHNNSSNHNNSSINSS) are compositionally biased toward low complexity. A Phosphoserine modification is found at Ser829. The segment covering 836–856 (HQQQQLQHTTNSTHQQQQAQQ) has biased composition (low complexity). A compositionally biased stretch (polar residues) spans 950–963 (PRGNTCETSLSTTP). Low complexity predominate over residues 967–996 (AQATSASSTNSSIGGSTQTLSATHSSSTLH). Residues 1001–1010 (GPQTASFNSE) are compositionally biased toward polar residues.

It belongs to the FHIP family.

This is FHIP family protein GH13096 from Drosophila grimshawi (Hawaiian fruit fly).